Here is a 298-residue protein sequence, read N- to C-terminus: Ectoine dioxygenase (298 aa).

A compositionally biased stretch (basic and acidic residues) spans 1–18 (MLQQAIDRDPVDRIDRYP). Residues 1 to 26 (MLQQAIDRDPVDRIDRYPTRTAEPAP) are disordered. Gln-133 is an L-ectoine binding site. Positions 150, 152, and 251 each coordinate Fe cation.

Belongs to the PhyH family. EctD subfamily. As to quaternary structure, homodimer. Requires Fe(2+) as cofactor.

The enzyme catalyses L-ectoine + 2-oxoglutarate + O2 = 5-hydroxyectoine + succinate + CO2. In terms of biological role, involved in the biosynthesis of 5-hydroxyectoine, called compatible solute, which helps organisms to survive extreme osmotic stress by acting as a highly soluble organic osmolyte. Catalyzes the 2-oxoglutarate-dependent selective hydroxylation of L-ectoine to yield (4S,5S)-5-hydroxyectoine. This chain is Ectoine dioxygenase, found in Nocardia farcinica (strain IFM 10152).